A 251-amino-acid polypeptide reads, in one-letter code: Phosphate import ATP-binding protein PstB 2 (251 aa).

An ABC transporter domain is found at 5–246 (ITSKDVHLSY…PKKQITSDYL (242 aa)). An ATP-binding site is contributed by 37–44 (GPSGCGKS).

It belongs to the ABC transporter superfamily. Phosphate importer (TC 3.A.1.7) family. The complex is composed of two ATP-binding proteins (PstB), two transmembrane proteins (PstC and PstA) and a solute-binding protein (PstS).

The protein localises to the cell membrane. It catalyses the reaction phosphate(out) + ATP + H2O = ADP + 2 phosphate(in) + H(+). Functionally, part of the ABC transporter complex PstSACB involved in phosphate import. Responsible for energy coupling to the transport system. The chain is Phosphate import ATP-binding protein PstB 2 from Lactobacillus johnsonii (strain CNCM I-12250 / La1 / NCC 533).